An 899-amino-acid chain; its full sequence is MNKHDQKKKRNKQHTDNVMGKKSKGFIKNKKNIGESGNEKKRNNNFNNIWKKKKRSGNSEKDQVDILGLLKGDSENMNDDDDNNMNDDYNNNNIKGDYNNNNIKDDDVDDDDYDDDDDDNFDENKNCNDNCSSKHKRNVPSKKEHDILELNNINFNETRKKMINYKNIFDGKFCDLKYILSESLINTLEKNEFIKMTSIQKMSIPLFFKPNDIFLKSMTGSGKTLCYAIPSIEKILNMKEKVKITRDMGIFVLVLSPTRELAIQINNLFCILTKPYPYIVASCITGGEKKKSEKNRLKKGISILTCTPGRLLDHLENTKSLKLTFLKMVILDEADKIIYLGTQDKIKLIYDMIRKIKQEEFSKVHKKKKKEENEVLDHINDTNMSDMNNISNDHSNDYEQFILDKFQMIFISATLNHAMKTLANYCLTNNTMWIEKEKKNGINGGNKNDETKQKSNDMISCMNRENSPLNIHNNDDNDDNDDNDENNGDNNNNNDDNNNNNDDNNNKNNDDDNNNTYELPEQLKQYCILIDMKQKFICLIYMLLDCIEKKKKPVVFLSNHHSVEYLQILLKNIYWPTDVNKKNIEVNKKLNEKITPVLEREDEKLLRKHLEQNILNNNYYNNNYNVGNISYKNINLEEIQNEDELNDEPGNLYNINADKHKRIYLFNNVNIYILHGNLSKEDRLGNFMDFSKTNNSILLCTDIISRGIHFDSLSVVIQYDPPQILEEYIHKVGRTARLNKQGSAYLFLLKSQKQFLNILKNKNIQLKIILGNTIINHFKKFCIPNFLKSVGKDILNFLHNHMQTIVKSNNTLMEKGTSAFLCTITSFYSTSKNLRSIFNAKDIHLGHLAYTFLLEKTPKQISKYKKEQNYINIKKQTVLSKKEKRLLKSKQFQKKQKRK.

2 stretches are compositionally biased toward basic residues: residues 1-12 (MNKHDQKKKRNK) and 21-31 (KKSKGFIKNKK). Residues 1–142 (MNKHDQKKKR…SKHKRNVPSK (142 aa)) form a disordered region. Over residues 76-85 (NMNDDDDNNM) the composition is skewed to acidic residues. Over residues 86–102 (NDDYNNNNIKGDYNNNN) the composition is skewed to low complexity. Acidic residues predominate over residues 106 to 121 (DDVDDDDYDDDDDDNF). The short motif at 173-201 (FCDLKYILSESLINTLEKNEFIKMTSIQK) is the Q motif element. Positions 204–433 (IPLFFKPNDI…NYCLTNNTMW (230 aa)) constitute a Helicase ATP-binding domain. ATP is bound at residue 217-224 (SMTGSGKT). Positions 332 to 335 (DEAD) match the DEAD box motif. Positions 463–472 (NRENSPLNIH) are enriched in polar residues. A disordered region spans residues 463-517 (NRENSPLNIHNNDDNDDNDDNDENNGDNNNNNDDNNNNNDDNNNKNNDDDNNNTY). Residues 476 to 487 (DNDDNDDNDENN) show a composition bias toward acidic residues. Positions 488-503 (GDNNNNNDDNNNNNDD) are enriched in low complexity. The Helicase C-terminal domain maps to 593 to 782 (KITPVLERED…TIINHFKKFC (190 aa)).

This sequence belongs to the DEAD box helicase family. DDX31/DBP7 subfamily.

It localises to the nucleus. The protein localises to the nucleolus. It catalyses the reaction ATP + H2O = ADP + phosphate + H(+). Its function is as follows. Has DNA helicase activity and may also have RNA helicase activity; the DNA helicase direction was not determined. Shows ssDNA and RNA dependent ATPase activity. The sequence is that of ATP-dependent DNA helicase DDX31 (DDX31) from Plasmodium falciparum (isolate 3D7).